The following is a 104-amino-acid chain: Flagellar hook-basal body complex protein FliE (104 aa).

Belongs to the FliE family.

Its subcellular location is the bacterial flagellum basal body. The polypeptide is Flagellar hook-basal body complex protein FliE (Escherichia coli O6:K15:H31 (strain 536 / UPEC)).